The sequence spans 161 residues: Allophycocyanin subunit alpha-B (161 aa).

N71 is modified (N4-methylasparagine). C81 lines the (2R,3E)-phycocyanobilin pocket.

The protein belongs to the phycobiliprotein family. Heterohexamer of two alpha chains, one alpha-B chain and three beta chains. Post-translationally, contains one covalently linked phycocyanobilin chromophore. The chromophore is added by phycocyanobilin lyase CpcS 1.

Its subcellular location is the cellular thylakoid membrane. In terms of biological role, light-harvesting photosynthetic bile pigment-protein from the phycobiliprotein complex. Allophycocyanin has a maximum absorption at approximately 654 nanometers. The polypeptide is Allophycocyanin subunit alpha-B (apcD) (Nostoc sp. (strain PCC 7120 / SAG 25.82 / UTEX 2576)).